The primary structure comprises 390 residues: Chorismate synthase (390 aa).

NADP(+) contacts are provided by arginine 40 and arginine 46. FMN-binding positions include 128 to 130 (RAS), 251 to 252 (QA), glycine 296, 311 to 315 (KPIPT), and arginine 339.

This sequence belongs to the chorismate synthase family. In terms of assembly, homotetramer. The cofactor is FMNH2.

It catalyses the reaction 5-O-(1-carboxyvinyl)-3-phosphoshikimate = chorismate + phosphate. The protein operates within metabolic intermediate biosynthesis; chorismate biosynthesis; chorismate from D-erythrose 4-phosphate and phosphoenolpyruvate: step 7/7. Catalyzes the anti-1,4-elimination of the C-3 phosphate and the C-6 proR hydrogen from 5-enolpyruvylshikimate-3-phosphate (EPSP) to yield chorismate, which is the branch point compound that serves as the starting substrate for the three terminal pathways of aromatic amino acid biosynthesis. This reaction introduces a second double bond into the aromatic ring system. The sequence is that of Chorismate synthase from Sulfurihydrogenibium sp. (strain YO3AOP1).